Here is a 347-residue protein sequence, read N- to C-terminus: uncharacterized protein (347 aa).

10 helical membrane passes run 15–35 (FVPSWFAAVMGTGILAVDSLL), 46–66 (VAVGLFYFNVLLFFIFLVPWV), 84–104 (VLSAFYPTIAVSCLVLGADFI), 111–131 (FWGGVFWTLGAIGMFLFSLIV), 149–169 (GWYIPPVGLIVIPIAGSLIMP), 182–202 (INYFGWGAGFFLYLALLAVVI), 214–234 (AMAPTVWINLGPIGAGIVALI), 249–269 (FYIFSFIFWGFGLWWSLMAII), 283–303 (AMSWWAFIFPLGAYVASSHLV), and 312–332 (IDYIGFGLYWLLFFFWAITLI).

It belongs to the tellurite-resistance/dicarboxylate transporter (TDT) family.

The protein localises to the cell membrane. This is an uncharacterized protein from Methanocaldococcus jannaschii (strain ATCC 43067 / DSM 2661 / JAL-1 / JCM 10045 / NBRC 100440) (Methanococcus jannaschii).